Consider the following 133-residue polypeptide: Small ribosomal subunit protein uS19 (133 aa).

Belongs to the universal ribosomal protein uS19 family.

Its function is as follows. Protein S19 forms a complex with S13 that binds strongly to the 16S ribosomal RNA. The sequence is that of Small ribosomal subunit protein uS19 (rps19) from Archaeoglobus fulgidus (strain ATCC 49558 / DSM 4304 / JCM 9628 / NBRC 100126 / VC-16).